Here is a 137-residue protein sequence, read N- to C-terminus: MLQPKRTKFRKQMTGHNRGLAHRGSKVSFGEFALKSVSRGRLTARQIEAARRALTRHVKRGGKIWIRVFPDKPVTKKPLEVRMGKGKGNVEYWVAQIQPGKVLYEIEGVSEELAREAFALAAAKLPLATTFVKRTVM.

Belongs to the universal ribosomal protein uL16 family. As to quaternary structure, part of the 50S ribosomal subunit.

Its function is as follows. Binds 23S rRNA and is also seen to make contacts with the A and possibly P site tRNAs. This chain is Large ribosomal subunit protein uL16, found in Azotobacter vinelandii (strain DJ / ATCC BAA-1303).